The following is a 305-amino-acid chain: Probable lipid kinase YegS-like (305 aa).

A DAGKc domain is found at methionine 1–leucine 129. Residues threonine 39, glycine 65–aspartate 71, and threonine 92 each bind ATP. Positions 210, 213, and 215 each coordinate Mg(2+). The active-site Proton acceptor is glutamate 268.

Belongs to the diacylglycerol/lipid kinase family. YegS lipid kinase subfamily. It depends on Mg(2+) as a cofactor. Ca(2+) is required as a cofactor.

It localises to the cytoplasm. In terms of biological role, probably phosphorylates lipids; the in vivo substrate is unknown. In Pseudomonas savastanoi pv. phaseolicola (strain 1448A / Race 6) (Pseudomonas syringae pv. phaseolicola (strain 1448A / Race 6)), this protein is Probable lipid kinase YegS-like.